The primary structure comprises 351 residues: Penicillolysin (351 aa).

The N-terminal stretch at Met-1–Ala-19 is a signal peptide. Positions Phe-20–Arg-174 are excised as a propeptide. Residues Asn-52 and Asn-181 are each glycosylated (N-linked (GlcNAc...) asparagine). A Zn(2+)-binding site is contributed by His-302. Glu-303 is an active-site residue. Zn(2+)-binding residues include His-306 and Asp-317.

It belongs to the peptidase M35 family. It depends on Zn(2+) as a cofactor.

It catalyses the reaction Preferential cleavage of bonds with hydrophobic residues in P1'. Also 3-Asn-|-Gln-4 and 8-Gly-|-Ser-9 bonds in insulin B chain.. This Penicillium citrinum protein is Penicillolysin (plnC).